The primary structure comprises 358 residues: Chorismate synthase (358 aa).

Arg-48 and Arg-54 together coordinate NADP(+). FMN is bound by residues 125–127 (RSS), Gly-282, 297–301 (KPPAS), and Arg-323.

Belongs to the chorismate synthase family. Homotetramer. FMNH2 is required as a cofactor.

It carries out the reaction 5-O-(1-carboxyvinyl)-3-phosphoshikimate = chorismate + phosphate. It participates in metabolic intermediate biosynthesis; chorismate biosynthesis; chorismate from D-erythrose 4-phosphate and phosphoenolpyruvate: step 7/7. Its function is as follows. Catalyzes the anti-1,4-elimination of the C-3 phosphate and the C-6 proR hydrogen from 5-enolpyruvylshikimate-3-phosphate (EPSP) to yield chorismate, which is the branch point compound that serves as the starting substrate for the three terminal pathways of aromatic amino acid biosynthesis. This reaction introduces a second double bond into the aromatic ring system. The protein is Chorismate synthase of Roseiflexus castenholzii (strain DSM 13941 / HLO8).